Reading from the N-terminus, the 328-residue chain is RNA binding protein fox-1 homolog 3 (328 aa).

Pro residues predominate over residues 1 to 30 (MAQPYPPAQYPPPPQNGIPAEYAPPPPHPT). Residues 1 to 106 (MAQPYPPAQY…QPKRLHVSNI (106 aa)) are disordered. The segment covering 49–87 (TPAQTHPEQPSSDTSTQPITGAQTVPQTDEAAQTDSQPL) has biased composition (polar residues). Residues 99–172 (KRLHVSNIPF…NPVVGAVYGP (74 aa)) form the RRM domain. The residue at position 192 (Arg192) is an Asymmetric dimethylarginine; alternate. Position 192 is an omega-N-methylarginine; alternate (Arg192). Arg288 is subject to Asymmetric dimethylarginine.

It localises to the nucleus. It is found in the cytoplasm. Pre-mRNA alternative splicing regulator. Regulates alternative splicing of RBFOX2 to enhance the production of mRNA species that are targeted for nonsense-mediated decay (NMD). In Bos taurus (Bovine), this protein is RNA binding protein fox-1 homolog 3 (RBFOX3).